Reading from the N-terminus, the 162-residue chain is Non-specific lipid transfer protein GPI-anchored 27 (162 aa).

The signal sequence occupies residues 1–29; sequence MAYTNKVAVAVGAAVVFLAVVMNPRWTEA. 4 disulfides stabilise this stretch: C39/C78, C50/C62, C63/C102, and C76/C110. N68 carries an N-linked (GlcNAc...) asparagine glycan. N-linked (GlcNAc...) asparagine glycans are attached at residues N124 and N135. A lipid anchor (GPI-anchor amidated serine) is attached at S137. A propeptide spans 138–162 (removed in mature form); it reads VGGKNKVATSMSAFGLVAILLFVMF.

This sequence belongs to the plant LTP family.

It is found in the cell membrane. Functionally, probable lipid transfer protein. This Arabidopsis thaliana (Mouse-ear cress) protein is Non-specific lipid transfer protein GPI-anchored 27.